The chain runs to 183 residues: Pyruvoyl-dependent arginine decarboxylase 2 (183 aa).

Position 41 is a pyruvic acid (Ser) (S41).

Belongs to the PdaD family. Pyruvate serves as cofactor.

The catalysed reaction is L-arginine + H(+) = agmatine + CO2. The chain is Pyruvoyl-dependent arginine decarboxylase 2 (pdaD2) from Methanosarcina acetivorans (strain ATCC 35395 / DSM 2834 / JCM 12185 / C2A).